We begin with the raw amino-acid sequence, 134 residues long: Large ribosomal subunit protein bL17 (134 aa).

Belongs to the bacterial ribosomal protein bL17 family. As to quaternary structure, part of the 50S ribosomal subunit. Contacts protein L32.

The chain is Large ribosomal subunit protein bL17 from Colwellia psychrerythraea (strain 34H / ATCC BAA-681) (Vibrio psychroerythus).